The sequence spans 154 residues: Small heat shock protein C2 (154 aa).

The region spanning 43-154 is the sHSP domain; the sequence is STEKNLIPRT…GKTRKIEVKG (112 aa).

Belongs to the small heat shock protein (HSP20) family.

This chain is Small heat shock protein C2 (hspC2), found in Rickettsia felis (strain ATCC VR-1525 / URRWXCal2) (Rickettsia azadi).